The sequence spans 21 residues: ATGSGGMNLVFVGAEMAPXXX.

This sequence belongs to the glycosyltransferase 1 family. Bacterial/plant glycogen synthase subfamily.

Its subcellular location is the plastid. It localises to the chloroplast. The protein localises to the amyloplast. The enzyme catalyses an NDP-alpha-D-glucose + [(1-&gt;4)-alpha-D-glucosyl](n) = [(1-&gt;4)-alpha-D-glucosyl](n+1) + a ribonucleoside 5'-diphosphate + H(+). Its pathway is glycan biosynthesis; starch biosynthesis. The chain is Granule-bound starch synthase 1 from Secale cereale (Rye).